The primary structure comprises 352 residues: Photosystem II D2 protein (352 aa).

The chain crosses the membrane as a helical span at residues 40–60; that stretch reads CAFLSIGGWLTGTTFVTSWYT. Histidine 117 lines the chlorophyll a pocket. A helical transmembrane segment spans residues 124–140; sequence GFCLRQIEIARLVGIRP. Glutamine 129 and asparagine 142 together coordinate pheophytin a. The helical transmembrane segment at 152-165 threads the bilayer; that stretch reads VFVSVFLMYPLGQS. Histidine 197 lines the chlorophyll a pocket. A helical transmembrane segment spans residues 207-227; it reads GALLCAIHGATVENTLFQDGE. Positions 214 and 261 each coordinate a plastoquinone. Histidine 214 serves as a coordination point for Fe cation. A Fe cation-binding site is contributed by histidine 268. The helical transmembrane segment at 278 to 294 threads the bilayer; that stretch reads GLWMSSIGIVGLAFNLR.

Belongs to the reaction center PufL/M/PsbA/D family. As to quaternary structure, PSII is composed of 1 copy each of membrane proteins PsbA, PsbB, PsbC, PsbD, PsbE, PsbF, PsbH, PsbI, PsbJ, PsbK, PsbL, PsbM, PsbT, PsbX, PsbY, PsbZ, Psb30/Ycf12, peripheral proteins PsbO, CyanoQ (PsbQ), PsbU, PsbV and a large number of cofactors. It forms dimeric complexes. The D1/D2 heterodimer binds P680, chlorophylls that are the primary electron donor of PSII, and subsequent electron acceptors. It shares a non-heme iron and each subunit binds pheophytin, quinone, additional chlorophylls, carotenoids and lipids. There is also a Cl(-1) ion associated with D1 and D2, which is required for oxygen evolution. The PSII complex binds additional chlorophylls, carotenoids and specific lipids. serves as cofactor.

It is found in the cellular thylakoid membrane. It carries out the reaction 2 a plastoquinone + 4 hnu + 2 H2O = 2 a plastoquinol + O2. In terms of biological role, photosystem II (PSII) is a light-driven water:plastoquinone oxidoreductase that uses light energy to abstract electrons from H(2)O, generating O(2) and a proton gradient subsequently used for ATP formation. It consists of a core antenna complex that captures photons, and an electron transfer chain that converts photonic excitation into a charge separation. The D1/D2 (PsbA/PsbD) reaction center heterodimer binds P680, the primary electron donor of PSII as well as several subsequent electron acceptors. D2 is needed for assembly of a stable PSII complex. The sequence is that of Photosystem II D2 protein from Trichodesmium erythraeum (strain IMS101).